The chain runs to 274 residues: Undecaprenyl-diphosphatase (274 aa).

7 helical membrane-spanning segments follow: residues 40-60, 90-110, 114-134, 147-167, 190-210, 221-241, and 252-272; these read PGAAFTAVIQIGTEVAVLMFF, WFIIVGSVPIVLLGIALKDVI, FRSLWLIGTTLIVLGLVLGVA, ISLRDAILMGLAQALALIPGV, YAFLLAIPAVIGAGVFELKDI, PTIVATIVSFVVGYAAIAWLL, and FVLYRVALGAATLVLVATGVI.

It belongs to the UppP family.

Its subcellular location is the cell membrane. It carries out the reaction di-trans,octa-cis-undecaprenyl diphosphate + H2O = di-trans,octa-cis-undecaprenyl phosphate + phosphate + H(+). Catalyzes the dephosphorylation of undecaprenyl diphosphate (UPP). Confers resistance to bacitracin. In Nocardioides sp. (strain ATCC BAA-499 / JS614), this protein is Undecaprenyl-diphosphatase.